The primary structure comprises 545 residues: Betaine receptor acr-23 (545 aa).

A signal peptide spans 1-19; it reads MHRIYTFLIFISQLALGLS. The Extracellular segment spans residues 20-244; the sequence is NNPDIPIQYE…DVVIQRKPLY (225 aa). 2 N-linked (GlcNAc...) asparagine glycosylation sites follow: Asn53 and Asn97. Cystine bridges form between Cys157-Cys171 and Cys224-Cys225. N-linked (GlcNAc...) asparagine glycosylation occurs at Asn228. The chain crosses the membrane as a helical span at residues 245–265; that stretch reads YVLNLIAPTAVITFISIIGFF. Asn276 carries N-linked (GlcNAc...) asparagine glycosylation. Transmembrane regions (helical) follow at residues 287 to 307 and 317 to 337; these read EKITLGITTLLSMSIMIFMVS and VPLIALFYTLMITIISVGTLA. Residues 338 to 512 are Cytoplasmic-facing; it reads ASSVIFVQKL…WDWVAAVLER (175 aa). Residues 513 to 533 traverse the membrane as a helical segment; it reads VFLIFFTICFLFSAIGINLYG.

Belongs to the ligand-gated ion channel (TC 1.A.9) family. Acetylcholine receptor (TC 1.A.9.1) subfamily. In terms of tissue distribution, expressed in the body wall muscles that are arranged into four longitudinal bundles, some mechanosensory neurons, the head muscles and multiple interneurons. Not expressed in motor neurons (at protein level).

It is found in the cell membrane. In terms of biological role, betaine receptor that functions as a ligand-gated non-selective monovalent cation channel in mechanosensory neurons to maintain basal levels of locomotion. The channel is permeable to Na(+) and K(+) but not to Ba(2+) or Ca(2+) ions. Elicits current in response to betaine, very weak current in response to choline, virtually no current in response to acetylcholine and nicotine, and no current in response to glycine and GABA. This Caenorhabditis elegans protein is Betaine receptor acr-23.